Reading from the N-terminus, the 975-residue chain is E3 ubiquitin-protein ligase NEDD4-like (975 aa).

A2 is modified (N-acetylalanine). A C2 domain is found at 4–126; the sequence is GLGEPVYGLS…TEDPTMERPY (123 aa). Disordered stretches follow at residues 178–202, 244–272, and 285–312; these read DSNDSASQHQEELPPPPLPPGWEEK, AAHRRFRSRRHISEDLEPEPSEGGDVPEP, and DSLGLALPPPPASPGSRTSPQELSEELS. The WW 1 domain occupies 193 to 226; the sequence is PPLPPGWEEKVDNLGRTYYVNHNNRTTQWHRPSL. S312 carries the phosphoserine modification. Position 318 is a phosphothreonine (T318). Position 342 is a phosphoserine; by WNK1 and WNK4 (S342). 2 disordered regions span residues 349-393 and 424-496; these read EQGH…GWEE and GASG…KVTQ. T367 carries the post-translational modification Phosphothreonine; by SGK1. One can recognise a WW 2 domain in the interval 385–418; that stretch reads PGLPSGWEERKDAKGRTYYVNHNNRTTTWTRPIM. S446 carries the post-translational modification Phosphoserine. S448 bears the Phosphoserine; by PKA and SGK1 mark. S449 carries the post-translational modification Phosphoserine; by WNK1 and WNK4. The span at 460 to 471 shows a compositional bias: basic and acidic residues; sequence GAKDSPVRRAVK. Phosphoserine occurs at positions 464, 475, 479, 483, and 487. WW domains follow at residues 497-530 and 548-581; these read SFLPPGWEMRIAPNGRPFFIDHNTKTTTWEDPRL and GPLPPGWEERIHLDGRTFYIDHNSKITQWEDPRL. Residues 640–974 form the HECT domain; that stretch reads RPDVLKARLW…VENAQGFEGV (335 aa). The active-site Glycyl thioester intermediate is the C942.

As to quaternary structure, interacts with UBE2E3. Interacts with NDFIP1; this interaction activates the E3 ubiquitin-protein ligase. Interacts with NDFIP2; this interaction activates the E3 ubiquitin-protein ligase. Interacts (via WW domains) with SCN1A. Interacts (via WW domains) with SCN2A. Interacts (via WW domains) with SCN3A. Interacts (via WW domains) with SCN5A. Interacts (via WW domains) with SCN8A. Interacts (via WW domains) with SCN9A. Interacts (via WW domains) with SCN10A. Interacts (via WW domains) with CLCN5. Interacts with SMAD2. Interacts with SMAD3. Interacts with SMAD6. Interacts with SMAD7. The phosphorylated form interacts with 14-3-3 proteins. Interacts with TNK2. Interacts with WNK1. Interacts with SGK1. Interacts (via C2 domain) with NPC2. Interacts with ARRDC4. Interacts with KCNQ1; promotes internalization of KCNQ1. Interacts (via domains WW1, 3 and 4) with USP36; the interaction inhibits ubiquitination of, at least, NTRK1, KCNQ2 and KCNQ3 by NEDD4L. Interacts with PRRG4 (via cytoplasmic domain). Interacts with LDLRAD3; the interaction is direct. Interacts with UBE2D2. Interacts with TTYH2 and TTYH3. In terms of assembly, (Microbial infection) Interacts with Epstein-Barr virus LMP2A. In terms of processing, phosphorylated by SGK1 or PKA; which impairs interaction with SCNN. Interaction with YWHAH inhibits dephosphorylation. Post-translationally, auto-ubiquitinated. Deubiquitinated by USP36, no effect on NEDD4L protein levels. Both proteins interact and regulate each other's ubiquitination levels. As to expression, ubiquitously expressed, with highest levels in prostate, pancreas, and kidney. Expressed in melanocytes.

The protein resides in the cytoplasm. The protein localises to the golgi apparatus. It localises to the endosome. It is found in the multivesicular body. It catalyses the reaction S-ubiquitinyl-[E2 ubiquitin-conjugating enzyme]-L-cysteine + [acceptor protein]-L-lysine = [E2 ubiquitin-conjugating enzyme]-L-cysteine + N(6)-ubiquitinyl-[acceptor protein]-L-lysine.. The catalysed reaction is [E2 ubiquitin-conjugating enzyme]-S-ubiquitinyl-L-cysteine + [acceptor protein]-L-cysteine = [E2 ubiquitin-conjugating enzyme]-L-cysteine + [acceptor protein]-S-ubiquitinyl-L-cysteine.. The protein operates within protein modification; protein ubiquitination. Activated by NDFIP1- and NDFIP2-binding. Functionally, E3 ubiquitin-protein ligase that mediates the polyubiquitination of lysine and cysteine residues on target proteins and is thereby implicated in the regulation of various signaling pathways including autophagy, innate immunity or DNA repair. Inhibits TGF-beta signaling by triggering SMAD2 and TGFBR1 ubiquitination and proteasome-dependent degradation. Downregulates autophagy and cell growth by ubiquitinating and reducing cellular ULK1 or ASCT2 levels. Promotes ubiquitination and internalization of various plasma membrane channels such as ENaC, SCN2A/Nav1.2, SCN3A/Nav1.3, SCN5A/Nav1.5, SCN9A/Nav1.7, SCN10A/Nav1.8, KCNA3/Kv1.3, KCNH2, EAAT1, KCNQ2/Kv7.2, KCNQ3/Kv7.3 or CLC5. Promotes ubiquitination and degradation of SGK1 and TNK2. Ubiquitinates BRAT1 and this ubiquitination is enhanced in the presence of NDFIP1. Plays a role in dendrite formation by melanocytes. Involved in the regulation of TOR signaling. Ubiquitinates and regulates protein levels of NTRK1 once this one is activated by NGF. Plays a role in antiviral innate immunity by catalyzing 'Lys-29'-linked cysteine ubiquitination of TRAF3, resulting in enhanced 'Lys-48' and 'Lys-63'-linked ubiquitination of TRAF3. Ubiquitinates TTYH2 and TTYH3 and regulates protein levels of TTYH2. This is E3 ubiquitin-protein ligase NEDD4-like from Homo sapiens (Human).